Reading from the N-terminus, the 120-residue chain is Ribosome-binding factor A (120 aa).

It belongs to the RbfA family. As to quaternary structure, monomer. Binds 30S ribosomal subunits, but not 50S ribosomal subunits or 70S ribosomes.

Its subcellular location is the cytoplasm. In terms of biological role, one of several proteins that assist in the late maturation steps of the functional core of the 30S ribosomal subunit. Associates with free 30S ribosomal subunits (but not with 30S subunits that are part of 70S ribosomes or polysomes). Required for efficient processing of 16S rRNA. May interact with the 5'-terminal helix region of 16S rRNA. The polypeptide is Ribosome-binding factor A (Chlamydia felis (strain Fe/C-56) (Chlamydophila felis)).